Consider the following 435-residue polypeptide: MARGDKVHINLVVIGHVDSGKSTTTGHLIYKCGGIDKRVIEKFEKESAEQGKGSFKYAWVLDKLKAERERGITIDISLWKFETAKYHFTIIDAPGHRDFIKNMITGTSQADVAILMIASPQGEFEAGISKDGQTREHALLAFTLGVKQMIVCLNKMDEKTVNFSEERYQEIKKELSDYLKKVGYKPDTIPFIPISGFNGDNMLERSTNAPWYKGPILVEALDALEPPKRPVDKPLRLPLQDVYKIGGIGTVPVGRVETGVIKPGMSIQFAPNKVIAECKSVEMHHEQLPEAVPGDNVGFNIKGVSVKDIRRGNVASDAKNDPAKEAATFYSQVIIMNHPGQIQAGYTPVLDCHTAHIACKFETIHDKIDRRTGKSQEENPKFIKNGDAALVTLIPTKALCVEVFQEYPPLGRYAVRDMKQTVAVGVIKKVEKKDK.

One can recognise a tr-type G domain in the interval 6–231; that stretch reads KVHINLVVIG…DALEPPKRPV (226 aa). A G1 region spans residues 15-22; the sequence is GHVDSGKS. GTP is bound at residue 15 to 22; that stretch reads GHVDSGKS. The tract at residues 71-75 is G2; that stretch reads GITID. The segment at 92-95 is G3; sequence DAPG. GTP contacts are provided by residues 92–96 and 154–157; these read DAPGH and NKMD. Residues 154 to 157 form a G4 region; it reads NKMD. Positions 195-197 are G5; sequence SGF.

This sequence belongs to the TRAFAC class translation factor GTPase superfamily. Classic translation factor GTPase family. EF-Tu/EF-1A subfamily.

Its subcellular location is the cytoplasm. Functionally, this protein promotes the GTP-dependent binding of aminoacyl-tRNA to the A-site of ribosomes during protein biosynthesis. This Tetrahymena pyriformis protein is Elongation factor 1-alpha.